A 718-amino-acid polypeptide reads, in one-letter code: Polyribonucleotide nucleotidyltransferase (718 aa).

Mg(2+) contacts are provided by D493 and D499. The KH domain occupies 560–619; the sequence is PRVIKKQIDPDKIRNVIGPGGKMINKIIDETGVKIDIEPDGLIYISSSDAEQAEQAIKAI. In terms of domain architecture, S1 motif spans 629 to 697; it reads GEVYLGKVVR…ERGRINLSRK (69 aa). Residues 695–718 form a disordered region; it reads SRKQALGEEDGKTNNDDKKSTKKT. Positions 699-718 are enriched in basic and acidic residues; that stretch reads ALGEEDGKTNNDDKKSTKKT.

Belongs to the polyribonucleotide nucleotidyltransferase family. Requires Mg(2+) as cofactor.

It is found in the cytoplasm. It catalyses the reaction RNA(n+1) + phosphate = RNA(n) + a ribonucleoside 5'-diphosphate. In terms of biological role, involved in mRNA degradation. Catalyzes the phosphorolysis of single-stranded polyribonucleotides processively in the 3'- to 5'-direction. This Natranaerobius thermophilus (strain ATCC BAA-1301 / DSM 18059 / JW/NM-WN-LF) protein is Polyribonucleotide nucleotidyltransferase.